The primary structure comprises 314 residues: Secreted frizzled-related protein 1 (314 aa).

The N-terminal stretch at 1–31 (MGVGRSEGGRRGAALGVLLALGVALLAVGSA) is a signal peptide. Residues 53 to 169 (TKPHQCVAIP…FPQDYVCIAM (117 aa)) form the FZ domain. Disulfide bonds link Cys58–Cys121, Cys68–Cys114, Cys105–Cys140, Cys129–Cys166, and Cys133–Cys157. Asn173 carries N-linked (GlcNAc...) asparagine glycosylation. Disulfide bonds link Cys186-Cys256, Cys189-Cys258, and Cys203-Cys306. In terms of domain architecture, NTR spans 186-306 (CPPCDNEMKS…FMKKVKAPDC (121 aa)).

Belongs to the secreted frizzled-related protein (sFRP) family.

It is found in the secreted. Soluble frizzled-related proteins (sFRPS) function as modulators of Wnt signaling through direct interaction with Wnts. They have a role in regulating cell growth and differentiation in specific cell types. This Gallus gallus (Chicken) protein is Secreted frizzled-related protein 1 (SFRP1).